Consider the following 1001-residue polypeptide: Copper-transporting ATPase RAN1 (1001 aa).

The tract at residues 1–21 (MAPSRRDLQLTPVTGGSSSQI) is disordered. Residues 1-298 (MAPSRRDLQL…TGEASNMFRR (298 aa)) are Cytoplasmic-facing. Residues 11–21 (TPVTGGSSSQI) show a composition bias toward polar residues. HMA domains are found at residues 56-122 (RKIQ…FEAE) and 133-199 (LVGQ…FEGS). Residues Cys67, Cys70, Cys144, and Cys147 each coordinate Cu(+). The HMA 3; degenerate domain occupies 207–273 (DKLVLRVDGI…GIEEDGFGKF (67 aa)). Residues 299-320 (FISSLVLSIPLFFIQVICPHIA) form a helical membrane-spanning segment. Over 321-338 (LFDALLVWRCGPFMMGDW) the chain is Extracellular. Residues 339–358 (LKWALVSVIQFVIGKRFYVA) form a helical membrane-spanning segment. Topologically, residues 359-365 (AWRALRN) are cytoplasmic. A helical membrane pass occupies residues 366-386 (GSTNMDVLVALGTSASYFYSV). Over 387-403 (GALLYGAVTGFWSPTYF) the chain is Extracellular. A helical transmembrane segment spans residues 404 to 424 (DASAMLITFVLLGKYLESLAK). The Cytoplasmic portion of the chain corresponds to 425–558 (GKTSDAMKKL…KAPIQKFADY (134 aa)). A helical membrane pass occupies residues 559 to 581 (VASIFVPVVITLALFTLVGWSIG). The Extracellular segment spans residues 582 to 602 (GAVGAYPDEWLPENGTHFVFS). A helical transmembrane segment spans residues 603–620 (LMFSISVVVIACPCALGL). Topologically, residues 621–931 (ATPTAVMVAT…DLSRKTLTRI (311 aa)) are cytoplasmic. The active-site 4-aspartylphosphate intermediate is Asp658. Mg(2+)-binding residues include Asp877 and Asp881. Residues 932 to 951 (RLNYVFAMAYNVVSIPIAAG) form a helical membrane-spanning segment. Over 952 to 963 (VFFPVLRVQLPP) the chain is Extracellular. A helical transmembrane segment spans residues 964-982 (WAAGACMALSSVSVVCSSL). The Cytoplasmic portion of the chain corresponds to 983–1001 (LLRRYKKPRLTTVLKITTE).

The protein belongs to the cation transport ATPase (P-type) (TC 3.A.3) family. Type IB subfamily.

Its subcellular location is the membrane. The catalysed reaction is Cu(+)(in) + ATP + H2O = Cu(+)(out) + ADP + phosphate + H(+). Its function is as follows. Involved in copper import into the cell. Essential for ethylene signaling, which requires copper. Acts by delivering copper to create functional hormone receptors. This Arabidopsis thaliana (Mouse-ear cress) protein is Copper-transporting ATPase RAN1 (RAN1).